A 45-amino-acid chain; its full sequence is Pyruvate dehydrogenase E1 component (45 aa).

As to quaternary structure, homodimer. Thiamine diphosphate serves as cofactor.

The catalysed reaction is N(6)-[(R)-lipoyl]-L-lysyl-[protein] + pyruvate + H(+) = N(6)-[(R)-S(8)-acetyldihydrolipoyl]-L-lysyl-[protein] + CO2. Functionally, the pyruvate dehydrogenase complex catalyzes the overall conversion of pyruvate to acetyl-CoA and CO(2). It contains multiple copies of three enzymatic components: pyruvate dehydrogenase (E1), dihydrolipoamide acetyltransferase (E2) and lipoamide dehydrogenase (E3). This Azotobacter vinelandii protein is Pyruvate dehydrogenase E1 component.